Consider the following 145-residue polypeptide: Bacilliredoxin SERP1006 (145 aa).

This sequence belongs to the bacilliredoxin family.

The chain is Bacilliredoxin SERP1006 from Staphylococcus epidermidis (strain ATCC 35984 / DSM 28319 / BCRC 17069 / CCUG 31568 / BM 3577 / RP62A).